We begin with the raw amino-acid sequence, 260 residues long: Neurotrophin-3 (260 aa).

Residues 1–18 (MSILFYVMFLPYLCGIHA) form the signal peptide. A propeptide spanning residues 19 to 141 (TNMDKRNLPE…VNNRTSRRKR (123 aa)) is cleaved from the precursor. Residue Asn-134 is glycosylated (N-linked (GlcNAc...) asparagine). 3 disulfides stabilise this stretch: Cys-155–Cys-220, Cys-198–Cys-249, and Cys-208–Cys-251.

Belongs to the NGF-beta family.

It is found in the secreted. In terms of biological role, seems to promote the survival of visceral and proprioceptive sensory neurons. This Xenopus laevis (African clawed frog) protein is Neurotrophin-3 (ntf3).